Consider the following 160-residue polypeptide: Transcription elongation factor GreA (160 aa).

Residues 43-76 (LSENAEYDAAREQQRQLENKIGDLESKLTRATIL) are a coiled coil.

Belongs to the GreA/GreB family.

Functionally, necessary for efficient RNA polymerase transcription elongation past template-encoded arresting sites. The arresting sites in DNA have the property of trapping a certain fraction of elongating RNA polymerases that pass through, resulting in locked ternary complexes. Cleavage of the nascent transcript by cleavage factors such as GreA or GreB allows the resumption of elongation from the new 3'terminus. GreA releases sequences of 2 to 3 nucleotides. The sequence is that of Transcription elongation factor GreA from Chlorobium phaeobacteroides (strain BS1).